Consider the following 361-residue polypeptide: Cobalt-precorrin-5B C(1)-methyltransferase (361 aa).

This sequence belongs to the CbiD family.

The enzyme catalyses Co-precorrin-5B + S-adenosyl-L-methionine = Co-precorrin-6A + S-adenosyl-L-homocysteine. It functions in the pathway cofactor biosynthesis; adenosylcobalamin biosynthesis; cob(II)yrinate a,c-diamide from sirohydrochlorin (anaerobic route): step 6/10. Catalyzes the methylation of C-1 in cobalt-precorrin-5B to form cobalt-precorrin-6A. This is Cobalt-precorrin-5B C(1)-methyltransferase from Methylorubrum extorquens (strain CM4 / NCIMB 13688) (Methylobacterium extorquens).